The chain runs to 180 residues: Inner membrane-spanning protein YciB (180 aa).

Helical transmembrane passes span 10-30, 47-67, 74-94, 121-141, and 151-171; these read IIAFFVFYKLADIYVATGVLM, ITTRHWVILAVVMLFGAVTLL, IKMKVSVVYVAIALMLLGGLI, YAWIIFCLALAAVNLYIAEFW, and VFGILGISLVFTIGTGFYMYH.

This sequence belongs to the YciB family.

It is found in the cell inner membrane. In terms of biological role, plays a role in cell envelope biogenesis, maintenance of cell envelope integrity and membrane homeostasis. This is Inner membrane-spanning protein YciB from Idiomarina loihiensis (strain ATCC BAA-735 / DSM 15497 / L2-TR).